Reading from the N-terminus, the 753-residue chain is 5-methyltetrahydropteroyltriglutamate--homocysteine methyltransferase (753 aa).

5-methyltetrahydropteroyltri-L-glutamate-binding positions include 17–20 (RELK) and Lys117. L-homocysteine-binding positions include 431 to 433 (IGS) and Glu484. L-methionine-binding positions include 431–433 (IGS) and Glu484. 5-methyltetrahydropteroyltri-L-glutamate contacts are provided by residues 515 to 516 (RC) and Trp561. Asp599 provides a ligand contact to L-homocysteine. Asp599 is an L-methionine binding site. Glu605 serves as a coordination point for 5-methyltetrahydropteroyltri-L-glutamate. Positions 641, 643, and 665 each coordinate Zn(2+). Residue His694 is the Proton donor of the active site. Cys726 is a binding site for Zn(2+).

This sequence belongs to the vitamin-B12 independent methionine synthase family. It depends on Zn(2+) as a cofactor.

The catalysed reaction is 5-methyltetrahydropteroyltri-L-glutamate + L-homocysteine = tetrahydropteroyltri-L-glutamate + L-methionine. It functions in the pathway amino-acid biosynthesis; L-methionine biosynthesis via de novo pathway; L-methionine from L-homocysteine (MetE route): step 1/1. Its function is as follows. Catalyzes the transfer of a methyl group from 5-methyltetrahydrofolate to homocysteine resulting in methionine formation. The protein is 5-methyltetrahydropteroyltriglutamate--homocysteine methyltransferase of Escherichia coli O8 (strain IAI1).